A 520-amino-acid chain; its full sequence is Cytochrome P450 monooxygenase btcC (520 aa).

A helical membrane pass occupies residues 2 to 22 (IFLLTLAGLKVLSIVILFGII). The N-linked (GlcNAc...) asparagine glycan is linked to N177. C448 contributes to the heme binding site. N511 carries an N-linked (GlcNAc...) asparagine glycan.

This sequence belongs to the cytochrome P450 family. It depends on heme as a cofactor.

It localises to the membrane. It participates in secondary metabolite biosynthesis; terpenoid biosynthesis. In terms of biological role, cytochrome P4590 monooxygenase part of the gene cluster that mediates the biosynthesis of betaestacins. The bifunctional terpene synthase btcA converts isopentenyl diphosphate (IPP) and dimethylallyl diphosphate (DMAPP) into the sesterterpene betaestacin I. The C-terminal prenyltransferase (PT) domain of btcA catalyzes formation of GFPP, whereas the N-terminal terpene cyclase (TC) domain catalyzes the cyclization of GFPP into betaestacin I. The cytochrome P450 monooxygenase btcB oxidizes the C25 methyl group of betaestacin I to yield the carboxylic acid betaestacin IV via the alcohol betaestacin III. The cytochrome P450 monooxygenase btcC further catalyzes the multistep oxidation of betaestacin IV to produce several compounds, including betaestacins Va, Vb, Vc and VI. The sequence is that of Cytochrome P450 monooxygenase btcC from Colletotrichum orbiculare (strain 104-T / ATCC 96160 / CBS 514.97 / LARS 414 / MAFF 240422) (Cucumber anthracnose fungus).